Reading from the N-terminus, the 264-residue chain is Tryptophan synthase alpha chain (264 aa).

Residues Glu49 and Asp60 each act as proton acceptor in the active site.

It belongs to the TrpA family. Tetramer of two alpha and two beta chains.

The enzyme catalyses (1S,2R)-1-C-(indol-3-yl)glycerol 3-phosphate + L-serine = D-glyceraldehyde 3-phosphate + L-tryptophan + H2O. It participates in amino-acid biosynthesis; L-tryptophan biosynthesis; L-tryptophan from chorismate: step 5/5. The alpha subunit is responsible for the aldol cleavage of indoleglycerol phosphate to indole and glyceraldehyde 3-phosphate. The polypeptide is Tryptophan synthase alpha chain (Geotalea daltonii (strain DSM 22248 / JCM 15807 / FRC-32) (Geobacter daltonii)).